Consider the following 444-residue polypeptide: D(2) dopamine receptor (444 aa).

Topologically, residues 1-37 (MDPLNLSWYDDDLERQNWSRPFNGSEGKPDRPHYNYY) are extracellular. Residues Asn5, Asn17, and Asn23 are each glycosylated (N-linked (GlcNAc...) asparagine). A helical membrane pass occupies residues 38–60 (AMLLTLLIFIIVFGNVLVCMAVS). Topologically, residues 61 to 70 (REKALQTTTN) are cytoplasmic. The helical transmembrane segment at 71 to 93 (YLIVSLAVADLLVATLVMPWVVY) threads the bilayer. Residues 94–108 (LEVVGEWKFSRIHCD) lie on the Extracellular side of the membrane. A disulfide bridge links Cys107 with Cys182. A helical membrane pass occupies residues 109 to 130 (IFVTLDVMMCTASILNLCAISI). Residues 131–151 (DRYTAVAMPMLYNTRYSSKRR) are Cytoplasmic-facing. Residues 152 to 172 (VTVMIAIVWVLSFTISCPLLF) form a helical membrane-spanning segment. Residues 173-188 (GLNNTDQNECIIANPA) lie on the Extracellular side of the membrane. Residues 189–213 (FVVYSSIVSFYVPFIVTLLVYIKIY) form a helical membrane-spanning segment. The tract at residues 211–374 (KIYIVLRKRR…SQQKEKKATQ (164 aa)) is interaction with PPP1R9B. Residues 214-374 (IVLRKRRKRV…SQQKEKKATQ (161 aa)) are Cytoplasmic-facing. The interval 282–329 (EMLSSTSPPERTRYSPIPPSHHQLTLPDPSHHGLHSNPDSPAKPEKNG) is disordered. Residues 375–396 (MLAIVLGVFIICWLPFFITHIL) traverse the membrane as a helical segment. The Extracellular segment spans residues 397–410 (NIHCDCNIPPVLYS). Cys400 and Cys402 are disulfide-bonded. A helical transmembrane segment spans residues 411-432 (AFTWLGYVNSAVNPIIYTTFNI). At 433-444 (EFRKAFMKILHC) the chain is on the cytoplasmic side. Cys444 carries S-palmitoyl cysteine lipidation.

It belongs to the G-protein coupled receptor 1 family. As to quaternary structure, forms homo- and heterooligomers with DRD4. The interaction with DRD4 may modulate agonist-induced downstream signaling. Interacts with CADPS and CADPS2. Interacts with GPRASP1, PPP1R9B and CLIC6. Interacts with ARRB2. Interacts with HTR2A. Interacts with DRD1. Interacts with KCNA2. In terms of processing, palmitoylated. Palmitoylation which is required for proper localization to the plasma membrane and stability of the receptor could be carried on by ZDHHC4, ZDHHC3 and ZDHHC8. As to expression, expressed in retinal hyaloid vessels at postnatal day 6. Expressed in the pituitary gland, stratum, brain stem and cortex. In terms of tissue distribution, expressed in the brain stem.

It is found in the cell membrane. It localises to the golgi apparatus membrane. Dopamine receptor whose activity is mediated by G proteins which inhibit adenylyl cyclase. Positively regulates postnatal regression of retinal hyaloid vessels via suppression of VEGFR2/KDR activity, downstream of OPN5. This Mus musculus (Mouse) protein is D(2) dopamine receptor (Drd2).